Reading from the N-terminus, the 1382-residue chain is Hepatocyte growth factor receptor (1382 aa).

An N-terminal signal peptide occupies residues 1–24; it reads MKASAVLAPGILALLFTLVQGSDG. Residues 25–935 lie on the Extracellular side of the membrane; it reads ECHEALAKSE…VQPDQNFTGL (911 aa). The region spanning 27-516 is the Sema domain; it reads HEALAKSEMN…TGKRITKIPL (490 aa). N-linked (GlcNAc...) asparagine glycans are attached at residues asparagine 45, asparagine 100, and asparagine 106. 4 disulfides stabilise this stretch: cysteine 95–cysteine 101, cysteine 98–cysteine 160, cysteine 133–cysteine 141, and cysteine 173–cysteine 176. 2 N-linked (GlcNAc...) asparagine glycosylation sites follow: asparagine 203 and asparagine 359. 2 cysteine pairs are disulfide-bonded: cysteine 299-cysteine 364 and cysteine 386-cysteine 398. N-linked (GlcNAc...) asparagine glycans are attached at residues asparagine 400 and asparagine 406. Intrachain disulfides connect cysteine 521–cysteine 539, cysteine 527–cysteine 562, cysteine 530–cysteine 546, and cysteine 542–cysteine 552. IPT/TIG domains follow at residues 564–656, 658–740, and 743–837; these read PAIH…FSYV, PVIT…FSYQ, and PVVY…LIYV. Threonine 583 is a glycosylation site (O-linked (Man) threonine). N-linked (GlcNAc...) asparagine glycosylation is found at asparagine 608 and asparagine 636. O-linked (Man) threonine glycosylation is found at threonine 677 and threonine 762. 3 N-linked (GlcNAc...) asparagine glycosylation sites follow: asparagine 786, asparagine 880, and asparagine 931. Residues 936–956 form a helical membrane-spanning segment; the sequence is IVGVVSISIILLLLLGLFLWM. Residues 957 to 1382 are Cytoplasmic-facing; the sequence is KKRKQIKDLG…QDNINGEVDT (426 aa). The residue at position 967 (serine 967) is a Phosphoserine. Threonine 978 carries the phosphothreonine modification. Phosphoserine occurs at positions 991, 998, and 1001. The residue at position 1004 (tyrosine 1004) is a Phosphotyrosine. One can recognise a Protein kinase domain in the interval 1079–1346; it reads VHFNEVIGRG…RISAIFSTFI (268 aa). Residues 1085–1093 and lysine 1111 contribute to the ATP site; that span reads IGRGHFGCV. Catalysis depends on aspartate 1205, which acts as the Proton acceptor. Residues 1213–1382 form an interaction with RANBP9 region; sequence LDEKFTVKVA…QDNINGEVDT (170 aa). Position 1231 is a phosphotyrosine (tyrosine 1231). 2 positions are modified to phosphotyrosine; by autocatalysis: tyrosine 1235 and tyrosine 1236. Position 1290 is a phosphothreonine (threonine 1290). Residues 1321–1360 are interaction with MUC20; the sequence is WHPKAEMRPSFSELVSRISAIFSTFIGEHYVHVNATYVNV. A phosphotyrosine; by autocatalysis mark is found at tyrosine 1350 and tyrosine 1357. Tyrosine 1366 bears the Phosphotyrosine mark.

Belongs to the protein kinase superfamily. Tyr protein kinase family. As to quaternary structure, heterodimer made of an alpha chain (50 kDa) and a beta chain (145 kDa) which are disulfide linked. Binds PLXNB1. Interacts when phosphorylated with downstream effectors including STAT3, PIK3R1, SRC, PCLG1, GRB2 and GAB1. Interacts with SPSB1, SPSB2 and SPSB4. Interacts with INPP5D/SHIP1. When phosphorylated at Tyr-1357, interacts with INPPL1/SHIP2. Interacts with RANBP9 and RANBP10, as well as SPSB1, SPSB2, SPSB3 and SPSB4. SPSB1 binding occurs in the presence and in the absence of HGF, however HGF treatment has a positive effect on this interaction. Interacts with MUC20; prevents interaction with GRB2 and suppresses hepatocyte growth factor-induced cell proliferation. Interacts with GRB10. Interacts with PTPN1 and PTPN2. Interacts with HSP90AA1 and HSP90AB1; the interaction suppresses MET kinase activity. Interacts with tensin TNS3. Interacts (when phosphorylated) with tensin TNS4 (via SH2 domain); the interaction increases MET protein stability by inhibiting MET endocytosis and subsequent lysosomal degradation. Autophosphorylated in response to ligand binding on Tyr-1235 and Tyr-1236 in the kinase domain leading to further phosphorylation of Tyr-1350 and Tyr-1357 in the C-terminal multifunctional docking site. Dephosphorylated by PTPRJ at Tyr-1350 and Tyr-1366. Dephosphorylated by PTPN1 and PTPN2. In terms of processing, ubiquitinated. Ubiquitination by CBL regulates the receptor stability and activity through proteasomal degradation. Post-translationally, O-mannosylation of IPT/TIG domains by TMEM260 is required for protein maturation. O-mannosylated residues are composed of single mannose glycans that are not elongated or modified.

The protein localises to the membrane. It catalyses the reaction L-tyrosyl-[protein] + ATP = O-phospho-L-tyrosyl-[protein] + ADP + H(+). With respect to regulation, in its inactive state, the C-terminal tail interacts with the catalytic domain and inhibits the kinase activity. Upon ligand binding, the C-terminal tail is displaced and becomes phosphorylated, thus increasing the kinase activity. Its function is as follows. Receptor tyrosine kinase that transduces signals from the extracellular matrix into the cytoplasm by binding to hepatocyte growth factor/HGF ligand. Regulates many physiological processes including proliferation, scattering, morphogenesis and survival. Ligand binding at the cell surface induces autophosphorylation of MET on its intracellular domain that provides docking sites for downstream signaling molecules. Following activation by ligand, interacts with the PI3-kinase subunit PIK3R1, PLCG1, SRC, GRB2, STAT3 or the adapter GAB1. Recruitment of these downstream effectors by MET leads to the activation of several signaling cascades including the RAS-ERK, PI3 kinase-AKT, or PLCgamma-PKC. The RAS-ERK activation is associated with the morphogenetic effects while PI3K/AKT coordinates prosurvival effects. During embryonic development, MET signaling plays a role in gastrulation, development and migration of muscles and neuronal precursors, angiogenesis and kidney formation. In adults, participates in wound healing as well as organ regeneration and tissue remodeling. Also promotes differentiation and proliferation of hematopoietic cells. This is Hepatocyte growth factor receptor (MET) from Microcebus murinus (Gray mouse lemur).